Consider the following 570-residue polypeptide: D-xylulose kinase A (570 aa).

Substrate is bound by residues histidine 95, arginine 166, aspartate 282, and asparagine 283. ATP contacts are provided by residues tryptophan 364, 469–470 (GG), and asparagine 473.

It belongs to the FGGY kinase family.

The protein localises to the cytoplasm. It carries out the reaction D-xylulose + ATP = D-xylulose 5-phosphate + ADP + H(+). Its function is as follows. Highly specific D-xylulose kinase which participates in the catabolism of xylose. Xylose is a major component of hemicelluloses such as xylan. Most fungi utilize D-xylose via three enzymatic reactions, xylose reductase (XR), xylitol dehydrogenase (XDH), and xylulokinase, to form xylulose 5-phosphate, which enters pentose phosphate pathway. The sequence is that of D-xylulose kinase A (xkiA) from Aspergillus niger.